A 431-amino-acid polypeptide reads, in one-letter code: Enolase (431 aa).

Glutamine 163 is a binding site for (2R)-2-phosphoglycerate. The Proton donor role is filled by glutamate 205. Mg(2+) contacts are provided by aspartate 242, glutamate 288, and aspartate 315. 4 residues coordinate (2R)-2-phosphoglycerate: lysine 340, arginine 369, serine 370, and lysine 391. Lysine 340 functions as the Proton acceptor in the catalytic mechanism.

This sequence belongs to the enolase family. Requires Mg(2+) as cofactor.

The protein localises to the cytoplasm. It is found in the secreted. The protein resides in the cell surface. The enzyme catalyses (2R)-2-phosphoglycerate = phosphoenolpyruvate + H2O. It functions in the pathway carbohydrate degradation; glycolysis; pyruvate from D-glyceraldehyde 3-phosphate: step 4/5. Functionally, catalyzes the reversible conversion of 2-phosphoglycerate (2-PG) into phosphoenolpyruvate (PEP). It is essential for the degradation of carbohydrates via glycolysis. The protein is Enolase of Bacillus cereus (strain AH187).